We begin with the raw amino-acid sequence, 457 residues long: Multidrug resistance protein MdtK (457 aa).

Residues 1 to 10 (MQKYISEARL) lie on the Cytoplasmic side of the membrane. The chain crosses the membrane as a helical span at residues 11-31 (LLALAIPVILAQIAQTAMGFV). The Periplasmic segment spans residues 32–52 (DTVMAGGYSATDMAAVAIGTS). Residues 53–73 (IWLPAILFGHGLLLALTPVIA) form a helical membrane-spanning segment. Over 74 to 92 (QLNGSGRRERIAHQVRQGF) the chain is Cytoplasmic. The helical transmembrane segment at 93 to 113 (WLAGFVSVLIMLVLWNAGYII) threads the bilayer. The Periplasmic segment spans residues 114 to 126 (RSMENIDPALADK). A helical transmembrane segment spans residues 127–147 (AVGYLRALLWGAPGYLFFQVA). Residues 148 to 159 (RNQCEGLAKTKP) lie on the Cytoplasmic side of the membrane. Residues 160–180 (GMVMGFIGLLVNIPVNYIFIY) form a helical membrane-spanning segment. Residues 181 to 188 (GHFGMPEL) lie on the Periplasmic side of the membrane. A helical transmembrane segment spans residues 189 to 209 (GGVGCGVATAAVYWVMFLAMV). Residues 210-242 (SYIKRARSMRDIRNEKGTAKPDPAVMKRLIQLG) lie on the Cytoplasmic side of the membrane. Residues 243-263 (LPIALALFFEVTLFAVVALLV) traverse the membrane as a helical segment. At 264–275 (SPLGIVDVAGHQ) the chain is on the periplasmic side. Residues 276 to 296 (IALNFSSLMFVLPMSLAAAVT) traverse the membrane as a helical segment. The Cytoplasmic segment spans residues 297–313 (IRVGYRLGQGSTLDAQT). A helical membrane pass occupies residues 314 to 334 (AARTGLMVGVCMATLTAIFTV). Over 335 to 349 (SLREQIALLYNDNPE) the chain is Periplasmic. A helical membrane pass occupies residues 350–370 (VVTLAAHLMLLAAVYQISDSI). The Cytoplasmic portion of the chain corresponds to 371 to 386 (QVIGSGILRGYKDTRS). A helical transmembrane segment spans residues 387–407 (IFYITFTAYWVLGLPSGYILA). The Periplasmic segment spans residues 408 to 417 (LTDLVVEPMG). Residues 418–438 (PAGFWIGFIIGLTSAAIMMML) form a helical membrane-spanning segment. Topologically, residues 439–457 (RMRFLQRMPSAIILQRASR) are cytoplasmic.

It belongs to the multi antimicrobial extrusion (MATE) (TC 2.A.66.1) family. MdtK subfamily.

The protein localises to the cell inner membrane. Its function is as follows. Multidrug efflux pump that functions probably as a Na(+)/drug antiporter. The sequence is that of Multidrug resistance protein MdtK from Shigella boydii serotype 4 (strain Sb227).